The chain runs to 412 residues: uncharacterized protein (412 aa).

Disordered regions lie at residues 150–171, 177–196, and 302–412; these read NTPG…QLGD, QITS…QQQQ, and QAQQ…PLNP. The span at 156 to 168 shows a compositional bias: low complexity; the sequence is QAQQQQQQQQQQQ. Polar residues-rich tracts occupy residues 177–187 and 310–321; these read QITSSNNSGNS and MGSSPTHSSPTI. Residues 335–345 are compositionally biased toward low complexity; sequence GGIINTNTNLN. Polar residues predominate over residues 350 to 363; that stretch reads VSPNQPMPNSSPIL. Low complexity-rich tracts occupy residues 364–373 and 381–394; these read PTNASSVVPP and TSNN…TTSP.

This is an uncharacterized protein from Dictyostelium discoideum (Social amoeba).